The following is a 341-amino-acid chain: tRNA N6-adenosine threonylcarbamoyltransferase (341 aa).

H115 and H119 together coordinate Fe cation. Residues 137-141, D170, G183, D187, and N276 each bind substrate; that span reads IVSGG. D304 contacts Fe cation.

Belongs to the KAE1 / TsaD family. Fe(2+) serves as cofactor.

Its subcellular location is the cytoplasm. The enzyme catalyses L-threonylcarbamoyladenylate + adenosine(37) in tRNA = N(6)-L-threonylcarbamoyladenosine(37) in tRNA + AMP + H(+). Required for the formation of a threonylcarbamoyl group on adenosine at position 37 (t(6)A37) in tRNAs that read codons beginning with adenine. Is involved in the transfer of the threonylcarbamoyl moiety of threonylcarbamoyl-AMP (TC-AMP) to the N6 group of A37, together with TsaE and TsaB. TsaD likely plays a direct catalytic role in this reaction. This chain is tRNA N6-adenosine threonylcarbamoyltransferase, found in Staphylococcus aureus (strain MRSA252).